Reading from the N-terminus, the 263-residue chain is 4-hydroxy-tetrahydrodipicolinate reductase (263 aa).

Residue 10-15 participates in NAD(+) binding; sequence GASGKM. Residue Arg-38 participates in NADP(+) binding. NAD(+) is bound by residues 97–99 and 123–126; these read GTT and APNF. The active-site Proton donor/acceptor is the His-153. Position 154 (His-154) interacts with (S)-2,3,4,5-tetrahydrodipicolinate. Lys-157 (proton donor) is an active-site residue. (S)-2,3,4,5-tetrahydrodipicolinate is bound at residue 163–164; that stretch reads GT.

The protein belongs to the DapB family.

Its subcellular location is the cytoplasm. It catalyses the reaction (S)-2,3,4,5-tetrahydrodipicolinate + NAD(+) + H2O = (2S,4S)-4-hydroxy-2,3,4,5-tetrahydrodipicolinate + NADH + H(+). The enzyme catalyses (S)-2,3,4,5-tetrahydrodipicolinate + NADP(+) + H2O = (2S,4S)-4-hydroxy-2,3,4,5-tetrahydrodipicolinate + NADPH + H(+). The protein operates within amino-acid biosynthesis; L-lysine biosynthesis via DAP pathway; (S)-tetrahydrodipicolinate from L-aspartate: step 4/4. Functionally, catalyzes the conversion of 4-hydroxy-tetrahydrodipicolinate (HTPA) to tetrahydrodipicolinate. The chain is 4-hydroxy-tetrahydrodipicolinate reductase from Dehalococcoides mccartyi (strain ATCC BAA-2100 / JCM 16839 / KCTC 5957 / BAV1).